The chain runs to 1776 residues: 6-methylsalicylic acid synthase (1776 aa).

Low complexity predominate over residues 1-18 (MHSVSPSTYPSGGTSPAP). Residues 1-26 (MHSVSPSTYPSGGTSPAPADTPGTEY) form a disordered region. Residues 32 to 457 (SNDVAVVGMA…GTVSHAVIEE (426 aa)) enclose the Ketosynthase family 3 (KS3) domain. Catalysis depends on for beta-ketoacyl synthase activity residues Cys204, His339, and His379. Residues 567–880 (VWVFSGHGAQ…IAQLHCRGAE (314 aa)) form a malonyl-CoA:ACP transacylase (MAT) domain region. Positions 925-1044 (HTLLGQRIPV…AYWDRKVLGS (120 aa)) are N-terminal hotdog fold. The dehydratase (DH) domain stretch occupies residues 925 to 1196 (HTLLGQRIPV…FTAMRFSEIE (272 aa)). The region spanning 925–1201 (HTLLGQRIPV…FSEIEGTPGV (277 aa)) is the PKS/mFAS DH domain. The active-site Proton acceptor; for dehydratase activity is His957. The segment at 1058–1201 (TTKLADNFSI…FSEIEGTPGV (144 aa)) is C-terminal hotdog fold. The active-site Proton donor; for dehydratase activity is Asp1113. Residues 1205 to 1657 (MESLVHQIAW…LRSLAIDDGE (453 aa)) form a product template (PT) domain region. Residues 1700–1774 (AYLDEKIRGC…HLVVWFAEKI (75 aa)) enclose the Carrier domain. Ser1734 carries the post-translational modification O-(pantetheine 4'-phosphoryl)serine.

The protein localises to the cytoplasm. Its subcellular location is the cytosol. The catalysed reaction is 3 malonyl-CoA + acetyl-CoA + NADPH + 3 H(+) = 6-methylsalicylate + 3 CO2 + NADP(+) + 4 CoA + H2O. It participates in mycotoxin biosynthesis; patulin biosynthesis. In terms of biological role, 6-methylsalicylic acid synthase; part of the gene cluster that mediates the biosynthesis of patulin, an acetate-derived tetraketide mycotoxin produced by several fungal species that shows antimicrobial properties against several bacteria. PatK catalyzes the first step of the pathway which is the synthesis of 6-methylsalicylic acid via condensation of 1 acetate and 3 malonate units. The pathway begins with the synthesis of 6-methylsalicylic acid by the polyketide synthase (PKS) patK via condensation of acetate and malonate units. The 6-methylsalicylic acid decarboxylase patG then catalyzes the decarboxylation of 6-methylsalicylic acid to yield m-cresol (also known as 3-methylphenol). These first reactions occur in the cytosol. The intermediate m-cresol is then transported into the endoplasmic reticulum where the cytochrome P450 monooxygenase patH converts it to m-hydroxybenzyl alcohol, which is further converted to gentisyl alcohol by the cytochrome P450 monooxygenase patI. The oxidoreductases patJ and patO further convert gentisyl alcohol to isoepoxydon in the vacuole. PatN catalyzes then the transformation of isoepoxydon into phyllostine. The cluster protein patF is responsible for the conversion from phyllostine to neopatulin whereas the alcohol dehydrogenase patD converts neopatulin to E-ascladiol. The steps between isoepoxydon and E-ascladiol occur in the cytosol, and E-ascladiol is probably secreted to the extracellular space by one of the cluster-specific transporters patC or patM. Finally, the secreted patulin synthase patE catalyzes the conversion of E-ascladiol to patulin. The chain is 6-methylsalicylic acid synthase from Penicillium expansum (Blue mold rot fungus).